The primary structure comprises 171 residues: CASP-like protein 0U2 (171 aa).

The Cytoplasmic segment spans residues 1 to 22; sequence MPVFGLAALKLNWEALSTPKFR. The chain crosses the membrane as a helical span at residues 23 to 42; the sequence is VTFAQWVCSLLMWSLMASYS. The Extracellular segment spans residues 43–48; it reads KHGEFK. Residues 49-69 traverse the membrane as a helical segment; it reads FVVVFGLVMWGLASTYLVYQL. At 70–77 the chain is on the cytoplasmic side; that stretch reads LNGPPLAP. The helical transmembrane segment at 78–98 threads the bilayer; sequence IVEFWANVAAGSLAFICLVLA. Residues 99–121 lie on the Extracellular side of the membrane; that stretch reads SATCNRAVGEPQTKVCSGELKPK. Residues 122 to 142 traverse the membrane as a helical segment; sequence ASAAFAFLLLCAYGGLAYLSW. Residues 143-171 lie on the Cytoplasmic side of the membrane; sequence RTWRNPPTIASYALHDDPEFAQPLHSSHK.

This sequence belongs to the Casparian strip membrane proteins (CASP) family. Homodimer and heterodimers.

It is found in the cell membrane. The chain is CASP-like protein 0U2 from Chlorokybus atmophyticus (Soil alga).